Consider the following 176-residue polypeptide: PRL-1 phosphatase (176 aa).

One can recognise a Tyrosine-protein phosphatase domain in the interval 13 to 166; it reads APALIEYKGM…YKPKARLKHK (154 aa). Cys-109 serves as the catalytic Phosphocysteine intermediate. Cys-173 is modified (cysteine methyl ester). A lipid anchor (S-farnesyl cysteine) is attached at Cys-173. Residues 174–176 constitute a propeptide, removed in mature form; it reads SVQ.

The protein belongs to the protein-tyrosine phosphatase family. In terms of assembly, homotrimer. Interacts with uex, possibly at the plasma membrane. In terms of tissue distribution, expressed in the adult head (at protein level). Expressed in neurons in the antennal lobe and V-glomeruli (at protein level). Expressed in dorsocentral neurons (at protein level).

The protein resides in the cytoplasm. It is found in the cell membrane. The protein localises to the apicolateral cell membrane. Its subcellular location is the cell projection. It localises to the axon. It catalyses the reaction O-phospho-L-tyrosyl-[protein] + H2O = L-tyrosyl-[protein] + phosphate. Probable phosphatase. Inhibits growth possibly by negatively regulating Src64B-induced growth. Regulates central nervous system circuit formation and stabilization of synapse-dense terminal arbors. In dorsocentral neurons, regulates synaptogenesis in terminal arbors via modulation of the insulin receptor pathway, likely upstream of Akt1, and via reduction of PtdIns(4,5)P2 (Phosphatidylinositol 4,5-bisphosphate) levels. In the nervous system, plays a protective role together with uex in response to olfactory carbon dioxide stimulation. In Drosophila melanogaster (Fruit fly), this protein is PRL-1 phosphatase.